The following is a 161-amino-acid chain: Phosphopantetheine adenylyltransferase (161 aa).

A substrate-binding site is contributed by Ser9. Residues 9–10 and His17 contribute to the ATP site; that span reads SF. Residues Lys41, Leu73, and Arg87 each coordinate substrate. Residues 88 to 90, Glu98, and 123 to 129 contribute to the ATP site; these read GLR and YTFISSS.

It belongs to the bacterial CoaD family. Homohexamer. It depends on Mg(2+) as a cofactor.

Its subcellular location is the cytoplasm. It catalyses the reaction (R)-4'-phosphopantetheine + ATP + H(+) = 3'-dephospho-CoA + diphosphate. Its pathway is cofactor biosynthesis; coenzyme A biosynthesis; CoA from (R)-pantothenate: step 4/5. Reversibly transfers an adenylyl group from ATP to 4'-phosphopantetheine, yielding dephospho-CoA (dPCoA) and pyrophosphate. The chain is Phosphopantetheine adenylyltransferase from Syntrophomonas wolfei subsp. wolfei (strain DSM 2245B / Goettingen).